The chain runs to 706 residues: DNA ligase (706 aa).

NAD(+) contacts are provided by residues Asp40–Asp44, Ser89–Ile90, and Glu120. Catalysis depends on Lys122, which acts as the N6-AMP-lysine intermediate. NAD(+) contacts are provided by Arg143, Glu190, Lys306, and Lys330. Residues Cys424, Cys427, Cys442, and Cys447 each contribute to the Zn(2+) site. Positions Glu625 to Thr706 constitute a BRCT domain.

The protein belongs to the NAD-dependent DNA ligase family. LigA subfamily. Requires Mg(2+) as cofactor. Mn(2+) is required as a cofactor.

It carries out the reaction NAD(+) + (deoxyribonucleotide)n-3'-hydroxyl + 5'-phospho-(deoxyribonucleotide)m = (deoxyribonucleotide)n+m + AMP + beta-nicotinamide D-nucleotide.. Functionally, DNA ligase that catalyzes the formation of phosphodiester linkages between 5'-phosphoryl and 3'-hydroxyl groups in double-stranded DNA using NAD as a coenzyme and as the energy source for the reaction. It is essential for DNA replication and repair of damaged DNA. In Rhodopirellula baltica (strain DSM 10527 / NCIMB 13988 / SH1), this protein is DNA ligase.